The primary structure comprises 132 residues: Phosphoribosyl-AMP cyclohydrolase (132 aa).

Aspartate 81 contributes to the Mg(2+) binding site. Cysteine 82 is a binding site for Zn(2+). The Mg(2+) site is built by aspartate 83 and aspartate 85. Residues cysteine 99 and cysteine 106 each coordinate Zn(2+).

It belongs to the PRA-CH family. As to quaternary structure, homodimer. It depends on Mg(2+) as a cofactor. Requires Zn(2+) as cofactor.

The protein localises to the cytoplasm. The catalysed reaction is 1-(5-phospho-beta-D-ribosyl)-5'-AMP + H2O = 1-(5-phospho-beta-D-ribosyl)-5-[(5-phospho-beta-D-ribosylamino)methylideneamino]imidazole-4-carboxamide. It participates in amino-acid biosynthesis; L-histidine biosynthesis; L-histidine from 5-phospho-alpha-D-ribose 1-diphosphate: step 3/9. Its function is as follows. Catalyzes the hydrolysis of the adenine ring of phosphoribosyl-AMP. This is Phosphoribosyl-AMP cyclohydrolase from Chromobacterium violaceum (strain ATCC 12472 / DSM 30191 / JCM 1249 / CCUG 213 / NBRC 12614 / NCIMB 9131 / NCTC 9757 / MK).